The primary structure comprises 134 residues: Small ribosomal subunit protein uS9 (134 aa).

A disordered region spans residues 97-134 (ENRQDLKSCGFLTRDPRKKERKKYGHKKARKSFQFSKR). The segment covering 115–134 (KERKKYGHKKARKSFQFSKR) has biased composition (basic residues).

This sequence belongs to the universal ribosomal protein uS9 family.

The sequence is that of Small ribosomal subunit protein uS9 (rpsI) from Chlamydia pneumoniae (Chlamydophila pneumoniae).